We begin with the raw amino-acid sequence, 1882 residues long: RNA2 polyprotein (1882 aa).

A run of 2 repeats spans residues serine 554 to phenylalanine 606 and serine 607 to phenylalanine 659. A 2.5 X tandem repeats, Pro-rich region spans residues serine 554 to proline 698. Residues serine 660–proline 698 form a 3; truncated and approximate repeat. Polar residues-rich tracts occupy residues serine 1289 to threonine 1303 and proline 1838 to proline 1847. Disordered regions lie at residues serine 1289–glutamine 1320 and proline 1838–glutamine 1863.

The protein belongs to the nepoviruses RNA2 polyprotein family. In terms of processing, specific enzymatic cleavages in vivo by the P1 encoded 3C-like protease yield mature proteins.

Its subcellular location is the host cell junction. It localises to the host plasmodesma. It is found in the virion. Functionally, protein 2A: implicated in RNA2 replication. Could also be required for nematode transmission of the virus. In terms of biological role, transports viral genome to neighboring plant cells directly through plasmosdesmata, without any budding. The movement protein allows efficient cell to cell propagation, by bypassing the host cell wall barrier. Acts by forming a tubular structure at the host plasmodesmata, enlarging it enough to allow free passage of virion capsids. The sequence is that of RNA2 polyprotein from Tomato ringspot virus (isolate raspberry) (ToRSV).